We begin with the raw amino-acid sequence, 423 residues long: D-tagatose-1,6-bisphosphate aldolase subunit GatZ (423 aa).

It belongs to the GatZ/KbaZ family. GatZ subfamily. As to quaternary structure, forms a complex with GatY.

It participates in carbohydrate metabolism; D-tagatose 6-phosphate degradation; D-glyceraldehyde 3-phosphate and glycerone phosphate from D-tagatose 6-phosphate: step 2/2. Component of the tagatose-1,6-bisphosphate aldolase GatYZ that is required for full activity and stability of the Y subunit. Could have a chaperone-like function for the proper and stable folding of GatY. When expressed alone, GatZ does not show any aldolase activity. Is involved in the catabolism of galactitol. The sequence is that of D-tagatose-1,6-bisphosphate aldolase subunit GatZ from Salmonella paratyphi B (strain ATCC BAA-1250 / SPB7).